The primary structure comprises 122 residues: Protein translocase subunit SecE (122 aa).

3 consecutive transmembrane segments (helical) span residues 14-34 (LLKW…NQYF), 38-58 (PILY…FLAL), and 93-113 (LIVV…DSLL).

It belongs to the SecE/SEC61-gamma family. Component of the Sec protein translocase complex. Heterotrimer consisting of SecY, SecE and SecG subunits. The heterotrimers can form oligomers, although 1 heterotrimer is thought to be able to translocate proteins. Interacts with the ribosome. Interacts with SecDF, and other proteins may be involved. Interacts with SecA.

It localises to the cell inner membrane. Its function is as follows. Essential subunit of the Sec protein translocation channel SecYEG. Clamps together the 2 halves of SecY. May contact the channel plug during translocation. This is Protein translocase subunit SecE from Pseudomonas aeruginosa (strain ATCC 15692 / DSM 22644 / CIP 104116 / JCM 14847 / LMG 12228 / 1C / PRS 101 / PAO1).